A 149-amino-acid polypeptide reads, in one-letter code: uncharacterized protein (149 aa).

The tract at residues 34 to 94 is disordered; it reads HTPCLPKVPR…NPIGSQRIHS (61 aa). The span at 56-66 shows a compositional bias: basic and acidic residues; that stretch reads QSPHRQGDRRR.

It localises to the mitochondrion. This is an uncharacterized protein from Arabidopsis thaliana (Mouse-ear cress).